The chain runs to 97 residues: Small ribosomal subunit protein bS20 (97 aa).

The protein belongs to the bacterial ribosomal protein bS20 family.

Its function is as follows. Binds directly to 16S ribosomal RNA. The protein is Small ribosomal subunit protein bS20 of Prochlorococcus marinus (strain MIT 9515).